The sequence spans 172 residues: S-ribosylhomocysteine lyase (172 aa).

Positions 54, 58, and 128 each coordinate Fe cation.

This sequence belongs to the LuxS family. In terms of assembly, homodimer. The cofactor is Fe cation.

The enzyme catalyses S-(5-deoxy-D-ribos-5-yl)-L-homocysteine = (S)-4,5-dihydroxypentane-2,3-dione + L-homocysteine. Involved in the synthesis of autoinducer 2 (AI-2) which is secreted by bacteria and is used to communicate both the cell density and the metabolic potential of the environment. The regulation of gene expression in response to changes in cell density is called quorum sensing. Catalyzes the transformation of S-ribosylhomocysteine (RHC) to homocysteine (HC) and 4,5-dihydroxy-2,3-pentadione (DPD). This chain is S-ribosylhomocysteine lyase, found in Aliivibrio fischeri (strain MJ11) (Vibrio fischeri).